The chain runs to 407 residues: Peptidase T (407 aa).

H78 serves as a coordination point for Zn(2+). D80 is a catalytic residue. A Zn(2+)-binding site is contributed by D141. The Proton acceptor role is filled by E175. Positions 176, 198, and 380 each coordinate Zn(2+).

This sequence belongs to the peptidase M20B family. Requires Zn(2+) as cofactor.

The protein resides in the cytoplasm. It carries out the reaction Release of the N-terminal residue from a tripeptide.. In terms of biological role, cleaves the N-terminal amino acid of tripeptides. The chain is Peptidase T from Clostridium novyi (strain NT).